The sequence spans 429 residues: Enolase 2 (429 aa).

Q163 lines the (2R)-2-phosphoglycerate pocket. E205 serves as the catalytic Proton donor. Positions 242, 286, and 313 each coordinate Mg(2+). (2R)-2-phosphoglycerate contacts are provided by K338, R367, S368, and K389. K338 acts as the Proton acceptor in catalysis.

The protein belongs to the enolase family. Mg(2+) serves as cofactor.

It is found in the cytoplasm. The protein resides in the secreted. Its subcellular location is the cell surface. The catalysed reaction is (2R)-2-phosphoglycerate = phosphoenolpyruvate + H2O. It participates in carbohydrate degradation; glycolysis; pyruvate from D-glyceraldehyde 3-phosphate: step 4/5. Catalyzes the reversible conversion of 2-phosphoglycerate (2-PG) into phosphoenolpyruvate (PEP). It is essential for the degradation of carbohydrates via glycolysis. The polypeptide is Enolase 2 (Lactiplantibacillus plantarum (strain ATCC BAA-793 / NCIMB 8826 / WCFS1) (Lactobacillus plantarum)).